The sequence spans 605 residues: Ankyrin repeat domain-containing protein 13D (605 aa).

2 ANK repeats span residues 39–68 (RGRT…NVGK) and 72–101 (QGWA…YQRA). The tract at residues 306 to 333 (AQQHSSHTGAPVQQAASPTNPTAISPEE) is disordered. Residues 319 to 328 (QAASPTNPTA) show a composition bias toward polar residues. UIM domains follow at residues 482-501 (EDDD…AGTE) and 528-547 (EEQL…STEP). The disordered stretch occupies residues 541 to 605 (LQLSTEPRGP…RILQLSLTEH (65 aa)). Pro residues predominate over residues 550-563 (PGSPPRTPPAPGPP). S552 bears the Phosphoserine mark. At T556 the chain carries Phosphothreonine. Residues 564 to 575 (SFEEQLRLALEL) show a composition bias toward low complexity. UIM domains follow at residues 564–583 (SFEE…QEER) and 589–605 (QEEE…LTEH). Over residues 576–589 (SSREQEERERRGQQ) the composition is skewed to basic and acidic residues.

Interacts with EGFR (ubiquitinated); the interaction is direct and may regulate EGFR internalization.

It is found in the cell membrane. Its subcellular location is the late endosome. Ubiquitin-binding protein that specifically recognizes and binds 'Lys-63'-linked ubiquitin. Does not bind 'Lys-48'-linked ubiquitin. Positively regulates the internalization of ligand-activated EGFR by binding to the Ub moiety of ubiquitinated EGFR at the cell membrane. This Homo sapiens (Human) protein is Ankyrin repeat domain-containing protein 13D (ANKRD13D).